The following is a 598-amino-acid chain: DNA (cytosine-5)-methyltransferase DRM2 (598 aa).

Disordered regions lie at residues 1 to 49 (MVDW…NGKA) and 114 to 146 (EVDEEEDDTNWDEYDTAGNCDRTPHSDGSGDED). Positions 42-91 (PQDANGKANGSGALVAEFMGMGFPKEMILKAIKEIGDTDTEQLLELLLTY) constitute a UBA 1 domain. Residues 114–128 (EVDEEEDDTNWDEYD) are compositionally biased toward acidic residues. The UBA 2 domain occupies 150–194 (EMSEKDEKMKSLVNMGFPEDEAKMAIDRCGLDAPVAVLVDSIYAS). Positions 227–252 (GSKKRKRYGSGPSGNQVPFDGSHEEP) are disordered. The SAM-dependent MTase DRM-type domain maps to 272-598 (VHRNLPDQAL…EHVKATMSAV (327 aa)).

Belongs to the class I-like SAM-binding methyltransferase superfamily. DRM-methyltransferase family. In terms of assembly, interacts (via UBA domains) with EIF4A.

Its subcellular location is the nucleus. The enzyme catalyses a 2'-deoxycytidine in DNA + S-adenosyl-L-methionine = a 5-methyl-2'-deoxycytidine in DNA + S-adenosyl-L-homocysteine + H(+). Involved in de novo DNA methylation. Required for CpG and non-CpG methylation. Required for normal establishment and maintenance of RNA-directed DNA methylation (RdDM) mediated by small interfering RNAs (siRNAs). Regulates proper plant development in both vegetative and reproductive stages through DNA methylation. The chain is DNA (cytosine-5)-methyltransferase DRM2 from Oryza sativa subsp. japonica (Rice).